The primary structure comprises 273 residues: Chaperone protein PsaB (273 aa).

An N-terminal signal peptide occupies residues 1–31; the sequence is MKNLFFSAYKKVFSYITSIVIFMVSLPYAYS. An intrachain disulfide couples Cys-128 to Cys-163.

It belongs to the periplasmic pilus chaperone family.

The protein localises to the periplasm. Functionally, required for the biogenesis of the pH 6 antigen. This Yersinia pestis protein is Chaperone protein PsaB (psaB).